The chain runs to 64 residues: Large ribosomal subunit protein bL32 (64 aa).

The tract at residues 1-28 (MAVQKSRVTPSRRGQRRSHDALTAKKLS) is disordered.

The protein belongs to the bacterial ribosomal protein bL32 family.

This is Large ribosomal subunit protein bL32 (rpmF) from Xylella fastidiosa (strain 9a5c).